The primary structure comprises 906 residues: Ankyrin repeat and MYND domain-containing protein 1 (906 aa).

MORN repeat units follow at residues 16-38 (YHGQ…DGSS), 39-59 (FTGT…TKTM), and 61-83 (FQGL…DGSQ). One copy of the ANK 1 repeat lies at 282-311 (KGYTVLAAAAMHSHLDIVNLLLDFGADVNK). A compositionally biased stretch (polar residues) spans 391-400 (SMQTPESSNM). The disordered stretch occupies residues 391 to 411 (SMQTPESSNMLHKEEVSPVKT). ANK repeat units follow at residues 479 to 508 (VRKM…DPNL), 511 to 540 (VPMQ…QTDI), 547 to 579 (QSLT…NVDA), 623 to 657 (GGRT…NPNV), 660 to 689 (SGHS…DPNL), and 701 to 732 (VVCD…DVLN). Residues Cys-845, Cys-848, Cys-859, Cys-862, Cys-868, Cys-872, His-881, and Cys-885 each contribute to the Zn(2+) site. Residues 845–885 (CYQCGRSIGVRLSPCPRCYGILTCSKYCKTKAWIEFHKKDC) form an MYND-type zinc finger.

The sequence is that of Ankyrin repeat and MYND domain-containing protein 1 (Ankmy1) from Mus musculus (Mouse).